A 271-amino-acid chain; its full sequence is Acyl-[acyl-carrier-protein]--UDP-N-acetylglucosamine O-acyltransferase (271 aa).

Belongs to the transferase hexapeptide repeat family. LpxA subfamily. As to quaternary structure, homotrimer.

Its subcellular location is the cytoplasm. It catalyses the reaction a (3R)-hydroxyacyl-[ACP] + UDP-N-acetyl-alpha-D-glucosamine = a UDP-3-O-[(3R)-3-hydroxyacyl]-N-acetyl-alpha-D-glucosamine + holo-[ACP]. It functions in the pathway glycolipid biosynthesis; lipid IV(A) biosynthesis; lipid IV(A) from (3R)-3-hydroxytetradecanoyl-[acyl-carrier-protein] and UDP-N-acetyl-alpha-D-glucosamine: step 1/6. In terms of biological role, involved in the biosynthesis of lipid A, a phosphorylated glycolipid that anchors the lipopolysaccharide to the outer membrane of the cell. This is Acyl-[acyl-carrier-protein]--UDP-N-acetylglucosamine O-acyltransferase from Ralstonia nicotianae (strain ATCC BAA-1114 / GMI1000) (Ralstonia solanacearum).